We begin with the raw amino-acid sequence, 145 residues long: D-aminoacyl-tRNA deacylase (145 aa).

The short motif at 137–138 is the Gly-cisPro motif, important for rejection of L-amino acids element; it reads GP.

Belongs to the DTD family. Homodimer.

It is found in the cytoplasm. It catalyses the reaction glycyl-tRNA(Ala) + H2O = tRNA(Ala) + glycine + H(+). The enzyme catalyses a D-aminoacyl-tRNA + H2O = a tRNA + a D-alpha-amino acid + H(+). An aminoacyl-tRNA editing enzyme that deacylates mischarged D-aminoacyl-tRNAs. Also deacylates mischarged glycyl-tRNA(Ala), protecting cells against glycine mischarging by AlaRS. Acts via tRNA-based rather than protein-based catalysis; rejects L-amino acids rather than detecting D-amino acids in the active site. By recycling D-aminoacyl-tRNA to D-amino acids and free tRNA molecules, this enzyme counteracts the toxicity associated with the formation of D-aminoacyl-tRNA entities in vivo and helps enforce protein L-homochirality. This Lactobacillus helveticus (strain DPC 4571) protein is D-aminoacyl-tRNA deacylase.